Reading from the N-terminus, the 116-residue chain is NADH dehydrogenase [ubiquinone] 1 alpha subcomplex subunit 5 (116 aa).

At alanine 2 the chain carries N-acetylalanine. N6-acetyllysine is present on residues lysine 30, lysine 46, and lysine 60. Position 89 is a phosphoserine (serine 89). An N6-acetyllysine; alternate modification is found at lysine 98. At lysine 98 the chain carries N6-succinyllysine; alternate.

It belongs to the complex I NDUFA5 subunit family. Complex I is composed of 45 different subunits.

It localises to the mitochondrion inner membrane. Accessory subunit of the mitochondrial membrane respiratory chain NADH dehydrogenase (Complex I), that is believed not to be involved in catalysis. Complex I functions in the transfer of electrons from NADH to the respiratory chain. The immediate electron acceptor for the enzyme is believed to be ubiquinone. The polypeptide is NADH dehydrogenase [ubiquinone] 1 alpha subcomplex subunit 5 (NDUFA5) (Macaca fascicularis (Crab-eating macaque)).